A 431-amino-acid chain; its full sequence is Light-independent protochlorophyllide reductase subunit N (431 aa).

Cys-29, Cys-54, and Cys-114 together coordinate [4Fe-4S] cluster.

This sequence belongs to the BchN/ChlN family. In terms of assembly, protochlorophyllide reductase is composed of three subunits; ChlL, ChlN and ChlB. Forms a heterotetramer of two ChlB and two ChlN subunits. [4Fe-4S] cluster serves as cofactor.

It localises to the plastid. The protein localises to the chloroplast. It carries out the reaction chlorophyllide a + oxidized 2[4Fe-4S]-[ferredoxin] + 2 ADP + 2 phosphate = protochlorophyllide a + reduced 2[4Fe-4S]-[ferredoxin] + 2 ATP + 2 H2O. It participates in porphyrin-containing compound metabolism; chlorophyll biosynthesis (light-independent). Its function is as follows. Component of the dark-operative protochlorophyllide reductase (DPOR) that uses Mg-ATP and reduced ferredoxin to reduce ring D of protochlorophyllide (Pchlide) to form chlorophyllide a (Chlide). This reaction is light-independent. The NB-protein (ChlN-ChlB) is the catalytic component of the complex. The sequence is that of Light-independent protochlorophyllide reductase subunit N from Nephroselmis olivacea (Green alga).